The primary structure comprises 134 residues: D-ribose pyranase (134 aa).

The Proton donor role is filled by H20. Substrate-binding positions include D28, H99, and 123 to 125; that span reads FSN.

It belongs to the RbsD / FucU family. RbsD subfamily. In terms of assembly, homodecamer.

It localises to the cytoplasm. It catalyses the reaction beta-D-ribopyranose = beta-D-ribofuranose. Its pathway is carbohydrate metabolism; D-ribose degradation; D-ribose 5-phosphate from beta-D-ribopyranose: step 1/2. Functionally, catalyzes the interconversion of beta-pyran and beta-furan forms of D-ribose. The protein is D-ribose pyranase of Staphylococcus epidermidis (strain ATCC 12228 / FDA PCI 1200).